Consider the following 412-residue polypeptide: Short-chain specific acyl-CoA dehydrogenase, mitochondrial (412 aa).

Residues 1-24 (MAAALLARASGPARRALCPRAWRQ) constitute a mitochondrion transit peptide. Position 27 is a phosphothreonine (T27). At K51 the chain carries N6-acetyllysine; alternate. K51 is modified (N6-succinyllysine; alternate). The residue at position 72 (K72) is an N6-acetyllysine. K129 is modified (N6-acetyllysine; alternate). K129 is modified (N6-succinyllysine; alternate). FAD-binding positions include 152–161 (FALSEPGNGS) and 185–187 (WIT). S161 serves as a coordination point for substrate. Position 208 is an N6-acetyllysine (K208). K262 bears the N6-acetyllysine; alternate mark. K262 is subject to N6-succinyllysine; alternate. Residue 269–272 (DMGR) participates in substrate binding. R297 serves as a coordination point for FAD. An N6-acetyllysine; alternate modification is found at K306. Position 306 is an N6-succinyllysine; alternate (K306). Residues Q308 and 365–369 (QILGG) each bind FAD. Residue E392 is the Proton acceptor of the active site. Substrate is bound at residue G393. 394 to 396 (TSE) is an FAD binding site.

This sequence belongs to the acyl-CoA dehydrogenase family. In terms of assembly, homotetramer. Requires FAD as cofactor.

It localises to the mitochondrion matrix. The catalysed reaction is a short-chain 2,3-saturated fatty acyl-CoA + oxidized [electron-transfer flavoprotein] + H(+) = a short-chain (2E)-enoyl-CoA + reduced [electron-transfer flavoprotein]. It carries out the reaction butanoyl-CoA + oxidized [electron-transfer flavoprotein] + H(+) = (2E)-butenoyl-CoA + reduced [electron-transfer flavoprotein]. It catalyses the reaction pentanoyl-CoA + oxidized [electron-transfer flavoprotein] + H(+) = (2E)-pentenoyl-CoA + reduced [electron-transfer flavoprotein]. The enzyme catalyses hexanoyl-CoA + oxidized [electron-transfer flavoprotein] + H(+) = (2E)-hexenoyl-CoA + reduced [electron-transfer flavoprotein]. It participates in lipid metabolism; mitochondrial fatty acid beta-oxidation. In terms of biological role, short-chain specific acyl-CoA dehydrogenase is one of the acyl-CoA dehydrogenases that catalyze the first step of mitochondrial fatty acid beta-oxidation, an aerobic process breaking down fatty acids into acetyl-CoA and allowing the production of energy from fats. The first step of fatty acid beta-oxidation consists in the removal of one hydrogen from C-2 and C-3 of the straight-chain fatty acyl-CoA thioester, resulting in the formation of trans-2-enoyl-CoA. Among the different mitochondrial acyl-CoA dehydrogenases, short-chain specific acyl-CoA dehydrogenase acts specifically on acyl-CoAs with saturated 4 to 6 carbons long primary chains. The polypeptide is Short-chain specific acyl-CoA dehydrogenase, mitochondrial (ACADS) (Homo sapiens (Human)).